Here is a 364-residue protein sequence, read N- to C-terminus: Carbamoyl phosphate synthase pyrimidine-specific small chain (364 aa).

Residues 1–171 (MKRRLVLENG…AYPSPGRGKR (171 aa)) form a CPSase region. L-glutamine-binding residues include Ser-45, Gly-219, and Gly-221. In terms of domain architecture, Glutamine amidotransferase type-1 spans 171–356 (RIVLVDFGMK…IEMIETTEKE (186 aa)). Cys-246 (nucleophile) is an active-site residue. L-glutamine-binding residues include Leu-247, Gln-250, Asn-288, Gly-290, and Tyr-291. Active-site residues include His-329 and Glu-331.

The protein belongs to the CarA family. In terms of assembly, composed of two chains; the small (or glutamine) chain promotes the hydrolysis of glutamine to ammonia, which is used by the large (or ammonia) chain to synthesize carbamoyl phosphate. Tetramer of heterodimers (alpha,beta)4. Interacts with BrxC.

It carries out the reaction hydrogencarbonate + L-glutamine + 2 ATP + H2O = carbamoyl phosphate + L-glutamate + 2 ADP + phosphate + 2 H(+). The enzyme catalyses L-glutamine + H2O = L-glutamate + NH4(+). It functions in the pathway pyrimidine metabolism; UMP biosynthesis via de novo pathway; (S)-dihydroorotate from bicarbonate: step 1/3. Small subunit of the glutamine-dependent carbamoyl phosphate synthetase (CPSase). CPSase catalyzes the formation of carbamoyl phosphate from the ammonia moiety of glutamine, carbonate, and phosphate donated by ATP, constituting the first step of the biosynthetic pathway leading to arginine and/or urea. The small subunit (glutamine amidotransferase) binds and cleaves glutamine to supply the large subunit with the substrate ammonia. The chain is Carbamoyl phosphate synthase pyrimidine-specific small chain from Bacillus subtilis (strain 168).